A 905-amino-acid polypeptide reads, in one-letter code: Heme/hemopexin-binding protein (905 aa).

A signal peptide spans 1 to 21 (MYKLNVISLIILTTYTGATYA).

The protein resides in the secreted. Functionally, binds heme/hemopexin complexes. This is Heme/hemopexin-binding protein (hxuA) from Haemophilus influenzae (strain ATCC 51907 / DSM 11121 / KW20 / Rd).